A 391-amino-acid chain; its full sequence is Nicotinate phosphoribosyltransferase (391 aa).

Residue His-216 is modified to Phosphohistidine; by autocatalysis.

The protein belongs to the NAPRTase family. In terms of processing, transiently phosphorylated on a His residue during the reaction cycle. Phosphorylation strongly increases the affinity for substrates and increases the rate of nicotinate D-ribonucleotide production. Dephosphorylation regenerates the low-affinity form of the enzyme, leading to product release.

It catalyses the reaction nicotinate + 5-phospho-alpha-D-ribose 1-diphosphate + ATP + H2O = nicotinate beta-D-ribonucleotide + ADP + phosphate + diphosphate. Its pathway is cofactor biosynthesis; NAD(+) biosynthesis; nicotinate D-ribonucleotide from nicotinate: step 1/1. Functionally, catalyzes the synthesis of beta-nicotinate D-ribonucleotide from nicotinate and 5-phospho-D-ribose 1-phosphate at the expense of ATP. This is Nicotinate phosphoribosyltransferase from Bordetella petrii (strain ATCC BAA-461 / DSM 12804 / CCUG 43448).